Reading from the N-terminus, the 341-residue chain is UDP-N-acetylenolpyruvoylglucosamine reductase (341 aa).

In terms of domain architecture, FAD-binding PCMH-type spans 12-182; that stretch reads LSAYAKRLDI…ISVGLLLKKN (171 aa). The active site involves arginine 158. Serine 228 functions as the Proton donor in the catalytic mechanism. Glutamate 324 is a catalytic residue.

The protein belongs to the MurB family. FAD is required as a cofactor.

The protein localises to the cytoplasm. The catalysed reaction is UDP-N-acetyl-alpha-D-muramate + NADP(+) = UDP-N-acetyl-3-O-(1-carboxyvinyl)-alpha-D-glucosamine + NADPH + H(+). Its pathway is cell wall biogenesis; peptidoglycan biosynthesis. Its function is as follows. Cell wall formation. The chain is UDP-N-acetylenolpyruvoylglucosamine reductase from Photorhabdus laumondii subsp. laumondii (strain DSM 15139 / CIP 105565 / TT01) (Photorhabdus luminescens subsp. laumondii).